Here is a 236-residue protein sequence, read N- to C-terminus: CD81 antigen (236 aa).

Over 1 to 12 (MGVEGCTKCIKY) the chain is Cytoplasmic. The chain crosses the membrane as a helical span at residues 13 to 33 (LLFVFNFVFWLAGGVILGVAL). Topologically, residues 34–63 (WLRHDPQTTSLLYLELGNKPAPNTFYVGIY) are extracellular. A helical transmembrane segment spans residues 64 to 84 (ILIAVGAVMMFVGFLGCYGAI). The Cytoplasmic segment spans residues 85-89 (QESQC). Residues 90 to 112 (LLGTFFTCLVILFACEVAAGIWG) form a helical membrane-spanning segment. The Extracellular portion of the chain corresponds to 113-201 (FVNKDQIAKD…QKIDELFSGK (89 aa)). Cystine bridges form between Cys156–Cys190 and Cys157–Cys175. Residues 202 to 224 (LYLIGIAAIVVAVIMIFEMILSM) form a helical membrane-spanning segment. Residue Glu219 participates in cholesterol binding. Residues 225-236 (VLCCGIRNSSVY) lie on the Cytoplasmic side of the membrane.

The protein belongs to the tetraspanin (TM4SF) family. Homodimer. Part of a complex composed of CD19, CR2/CD21, CD81 and IFITM1/CD225 in the membrane of mature B cells. Interacts (via the second extracellular domain) with CD19; this interaction is initiated early during biosynthesis in the ER and enables trafficking of only properly folded CD19. Part of a complex that includes MHC class II/HLA-DR molecules and IFITM1. Interacts with IFITM1. Interacts with IFITM2 and IFITM3. Part of integrin-tetraspanin complex composed of CD9, CD81, beta-1 and beta-2 integrins in the membrane of monocyte/macrophages. Interacts (via the second extracellular domain) with integrin ITGAV:ITGB3. Interacts with CD247/CD3 zeta, ICAM1 and CD9 at the immune synapse on T cell membrane. Part of a GPCR-tetraspanin complex consisting at least of ADGRG1, CD81, possibly CD9, and GNA11 in which CD81 enhances the association of ADGRG1 with GNA11. Part of a complex composed of CD9, CD81, PTGFRN and IGSF8. Interacts directly with IGSF8. Interacts with CD53 and SCIMP. Interacts with SAMHD1 (via its C-terminus). Interacts with glypican GPC3 and with the transcriptional repressor HHEX; binding to GPC3 decreases the availability of free CD81 for binding to HHEX, resulting in nuclear translocation of HHEX and transcriptional repression. Interacts with CLDN1. Interacts with CLDN6 and CLDN9. Not glycosylated. Post-translationally, likely constitutively palmitoylated at low levels. Protein palmitoylation is up-regulated upon coligation of BCR and CD9-C2R-CD81 complexes in lipid rafts. As to expression, expressed in oocytes (at protein level). Highly expressed in granulosa cells. Expressed in skeletal muscle mainly in endothelial cells of endomysial capillaries, in satellite cells and myoblasts (at protein level). Expressed in hepatocytes (at protein level).

The protein localises to the cell membrane. The protein resides in the basolateral cell membrane. Functionally, structural component of specialized membrane microdomains known as tetraspanin-enriched microdomains (TERMs), which act as platforms for receptor clustering and signaling. Essential for trafficking and compartmentalization of CD19 receptor on the cell surface of activated B cells. Upon initial encounter with a microbial pathogen, enables the assembly of CD19-CR2 and B cell receptor complexes at signaling TERMs, lowering the threshold dose of antigen required to trigger B cell clonal expansion and humoral immune response. In T cells, associates with CD4 or CD8 coreceptors and defines the maturation state of antigen-induced synapses with B cells. Facilitates localization of CD3 in these immune synapses, required for costimulation and sustained activation of T cells, preferentially triggering T helper type 2 immune response. Can act both as positive and negative regulator of homotypic or heterotypic cell-cell fusion processes. In myoblasts, associates with another tetraspanin CD9 in complex with PTGFRN and inhibits myotube fusion during muscle regeneration. In macrophages, associates with CD9 and beta-1 and beta-2 integrins, and prevents macrophage fusion into multinucleated giant cells specialized in ingesting complement-opsonized large particles. Also prevents the fusion between mononuclear cell progenitors into osteoclasts in charge of bone resorption. Positively regulates sperm-egg fusion and may be involved in the acrosome reaction. Regulates protein trafficking in intracellular compartments. In T cells, associates with dNTPase SAMHD1 and defines its subcellular location, enabling its degradation by the proteasome and thereby controlling intracellular dNTP levels. Also regulates integrin-dependent migration of macrophages, particularly relevant for inflammatory response in the lung. (Microbial infection) Specifically required for Plasmodium yoelii infectivity of hepatocytes, controlling sporozoite entry in hepatocytes via the parasitophorous vacuole and subsequent parasite differentiation to exoerythrocytic forms. The sequence is that of CD81 antigen from Mus musculus (Mouse).